Reading from the N-terminus, the 405-residue chain is MGVANDSSPEYQWMSPHLNYFKNFNKETLLKIEENDYINSSFFQQKDKRFYPINDDFYHISTGGYGIVFKIDNYVVKFVLEAIKLYSPMEIMAELTVPKFLYNNLKGDEKKLIVCVWAMGLNYKLTFLHTLYKRVLHMLLLLIQTMDGQELSLRYSSKVFLKAFNERKDSIKFVKLLSHFYPAVINSNINVINYFNRMFHFFEHEKGTNYEYERGNIIIFPLTLYSADKVDTELAIKLGFKSLVQYIKFIFLQMALLYIKIYELPCCDNFLHADLKPDNILLFDSNEPIIIHLDKKFVFNERIKSALNDFDFSQVAGIINKKIKNNFKVEHNWYYDFHFFVHTLLKTYPEIEKDIEFSTALEEFIMCTKTDCDKYRLKVSILHPISFLEKFIMRDIFSDWINGGN.

The 352-residue stretch at 54–405 (NDDFYHISTG…IFSDWINGGN (352 aa)) folds into the Protein kinase domain. Residues 60 to 68 (ISTGGYGIV) and Lys84 each bind ATP. Residue Asp274 is the Proton acceptor of the active site.

The protein belongs to the protein kinase superfamily. Ser/Thr protein kinase family. Poxviruses subfamily. Phosphorylated in vivo. Autophosphorylated in vitro.

It localises to the host endoplasmic reticulum. It is found in the host endoplasmic reticulum-Golgi intermediate compartment. It carries out the reaction L-seryl-[protein] + ATP = O-phospho-L-seryl-[protein] + ADP + H(+). It catalyses the reaction L-threonyl-[protein] + ATP = O-phospho-L-threonyl-[protein] + ADP + H(+). In terms of biological role, essential serine-protein kinase involved in the early stage of virion morphogenesis. This is Serine/threonine-protein kinase 2 (OPG054) from Vaccinia virus (strain L-IVP) (VACV).